The following is a 284-amino-acid chain: MQHKVVSIGDIKVANNLPFVLFGGMNVLESRDLAMRICEHYVTVTQKLDIPYVFKASFDKANRSSIHSYRGPGLDEGMKIFQELKETFGVKIITDVHEPSQAQPVSEVVDVIQLPAFLARQTDLVEAMAKTGAVINVKKPQFVSPGQMGNIVEKFKEGGNDQVILCDRGSNFGYDNLVVDMLGFHVMMQASEGAPVIFDVTHSLQCRDPFGAASGGRRGQVAELARAGMAVGLAGLFLEAHPDPDHARCDGPSALPLAKLEPFLAQIKAIDSLVKSFPELDTSK.

This sequence belongs to the KdsA family.

The protein localises to the cytoplasm. The catalysed reaction is D-arabinose 5-phosphate + phosphoenolpyruvate + H2O = 3-deoxy-alpha-D-manno-2-octulosonate-8-phosphate + phosphate. The protein operates within carbohydrate biosynthesis; 3-deoxy-D-manno-octulosonate biosynthesis; 3-deoxy-D-manno-octulosonate from D-ribulose 5-phosphate: step 2/3. It participates in bacterial outer membrane biogenesis; lipopolysaccharide biosynthesis. This chain is 2-dehydro-3-deoxyphosphooctonate aldolase, found in Proteus mirabilis (strain HI4320).